We begin with the raw amino-acid sequence, 130 residues long: Succinate dehydrogenase cytochrome b556 subunit (130 aa).

Over 1–26 (MADVNRGNRPLSPHLQVYRLPLAAIT) the chain is Cytoplasmic. A helical membrane pass occupies residues 27–52 (SIMTRITGHALVAGIVLITWWLVAAV). At 53–68 (TSPGAFACADWVVRSW) the chain is on the periplasmic side. The helical transmembrane segment at 69 to 89 (LGFIILTGSMWALWYHLLAGL) threads the bilayer. Residue His-84 participates in heme binding. The Cytoplasmic segment spans residues 90 to 109 (RHLFYDAGYGLEIEQAHKSS). Residues 110–130 (QALIAGSVVLAVLTLIVFFVF) form a helical membrane-spanning segment.

It belongs to the cytochrome b560 family. As to quaternary structure, part of an enzyme complex containing four subunits: a flavoprotein, an iron-sulfur protein, plus two membrane-anchoring proteins, SdhC and SdhD. The complex can form homotrimers. Heme serves as cofactor.

It is found in the cell inner membrane. Its pathway is carbohydrate metabolism; tricarboxylic acid cycle. Membrane-anchoring subunit of succinate dehydrogenase (SDH). This chain is Succinate dehydrogenase cytochrome b556 subunit (sdhC), found in Paracoccus denitrificans.